The sequence spans 369 residues: Glycolate oxidase 1 (369 aa).

The FMN hydroxy acid dehydrogenase domain maps to Met1 to Asp360. Tyr25 contributes to the glyoxylate binding site. FMN contacts are provided by residues Pro78–Ala80, Ser107, Gln128–Tyr130, and Thr156. Tyr130 contacts glyoxylate. A glyoxylate-binding site is contributed by Arg165. The FMN site is built by Lys231 and Ser253. Glyoxylate contacts are provided by His255 and Arg258. His255 (proton acceptor) is an active-site residue. FMN contacts are provided by residues Asp286–Arg290 and Gly309–Arg310. The short motif at Pro367–Leu369 is the Microbody targeting signal element.

It belongs to the FMN-dependent alpha-hydroxy acid dehydrogenase family. In terms of assembly, homotetramer. Interacts with rice dwarf virus (RDV) P8. This interaction promotes viral P8 relocation to virus factories peripheral to peroxisomes. The cofactor is FMN.

The protein resides in the peroxisome. It carries out the reaction glycolate + O2 = glyoxylate + H2O2. The protein operates within photosynthesis; photorespiration; glycine from 2-phosphoglycolate: step 2/3. Catalyzes the oxidation of glycolate to glyoxylate, with a reduction of O2 to H2O2. Is a key enzyme in photorespiration in plants. Can exert a strong regulation over photosynthesis, possibly through a feed-back inhibition on Rubisco activase. Does not seem to play a role in oxalate accumulation. The chain is Glycolate oxidase 1 (GLO1) from Oryza sativa subsp. indica (Rice).